The following is a 430-amino-acid chain: UDP-N-acetylglucosamine 1-carboxyvinyltransferase (430 aa).

Residue 22 to 23 participates in phosphoenolpyruvate binding; it reads KN. R102 serves as a coordination point for UDP-N-acetyl-alpha-D-glucosamine. C126 serves as the catalytic Proton donor. C126 bears the 2-(S-cysteinyl)pyruvic acid O-phosphothioketal mark. Residues 131–135, 172–175, D317, and I339 each bind UDP-N-acetyl-alpha-D-glucosamine; these read RPVDL and KVSV.

The protein belongs to the EPSP synthase family. MurA subfamily.

Its subcellular location is the cytoplasm. It carries out the reaction phosphoenolpyruvate + UDP-N-acetyl-alpha-D-glucosamine = UDP-N-acetyl-3-O-(1-carboxyvinyl)-alpha-D-glucosamine + phosphate. Its pathway is cell wall biogenesis; peptidoglycan biosynthesis. Cell wall formation. Adds enolpyruvyl to UDP-N-acetylglucosamine. The chain is UDP-N-acetylglucosamine 1-carboxyvinyltransferase from Allorhizobium ampelinum (strain ATCC BAA-846 / DSM 112012 / S4) (Agrobacterium vitis (strain S4)).